The sequence spans 343 residues: UDP-3-O-acylglucosamine N-acyltransferase (343 aa).

His239 acts as the Proton acceptor in catalysis.

Belongs to the transferase hexapeptide repeat family. LpxD subfamily. As to quaternary structure, homotrimer.

It catalyses the reaction a UDP-3-O-[(3R)-3-hydroxyacyl]-alpha-D-glucosamine + a (3R)-hydroxyacyl-[ACP] = a UDP-2-N,3-O-bis[(3R)-3-hydroxyacyl]-alpha-D-glucosamine + holo-[ACP] + H(+). Its pathway is bacterial outer membrane biogenesis; LPS lipid A biosynthesis. In terms of biological role, catalyzes the N-acylation of UDP-3-O-acylglucosamine using 3-hydroxyacyl-ACP as the acyl donor. Is involved in the biosynthesis of lipid A, a phosphorylated glycolipid that anchors the lipopolysaccharide to the outer membrane of the cell. The sequence is that of UDP-3-O-acylglucosamine N-acyltransferase from Vibrio vulnificus (strain YJ016).